The chain runs to 520 residues: Ribonuclease Y (520 aa).

A helical membrane pass occupies residues 3–23 (IEIQWIGIGAAFLVGAIGGAL). The region spanning 210-273 (AVSVVPLPND…EVARLALERL (64 aa)) is the KH domain. The 94-residue stretch at 336-429 (VLQHSIEVAF…VQAADALSGA (94 aa)) folds into the HD domain.

It belongs to the RNase Y family.

Its subcellular location is the cell membrane. Functionally, endoribonuclease that initiates mRNA decay. This chain is Ribonuclease Y, found in Syntrophotalea carbinolica (strain DSM 2380 / NBRC 103641 / GraBd1) (Pelobacter carbinolicus).